The sequence spans 134 residues: Large ribosomal subunit protein bL12 (134 aa).

Belongs to the bacterial ribosomal protein bL12 family. In terms of assembly, homodimer. Part of the ribosomal stalk of the 50S ribosomal subunit. Forms a multimeric L10(L12)X complex, where L10 forms an elongated spine to which 2 to 4 L12 dimers bind in a sequential fashion. Binds GTP-bound translation factors.

In terms of biological role, forms part of the ribosomal stalk which helps the ribosome interact with GTP-bound translation factors. Is thus essential for accurate translation. The chain is Large ribosomal subunit protein bL12 from Anaplasma phagocytophilum (strain HZ).